A 123-amino-acid chain; its full sequence is Holo-[acyl-carrier-protein] synthase (123 aa).

Residues Asp-8 and Glu-56 each contribute to the Mg(2+) site.

It belongs to the P-Pant transferase superfamily. AcpS family. Mg(2+) is required as a cofactor.

It is found in the cytoplasm. The enzyme catalyses apo-[ACP] + CoA = holo-[ACP] + adenosine 3',5'-bisphosphate + H(+). Functionally, transfers the 4'-phosphopantetheine moiety from coenzyme A to a Ser of acyl-carrier-protein. The protein is Holo-[acyl-carrier-protein] synthase of Clostridium beijerinckii (strain ATCC 51743 / NCIMB 8052) (Clostridium acetobutylicum).